A 644-amino-acid chain; its full sequence is Threonine--tRNA ligase (644 aa).

A TGS domain is found at Val-8–Thr-70. A catalytic region spans residues Asp-251–Pro-541. Zn(2+) contacts are provided by Cys-342, His-393, and His-518.

It belongs to the class-II aminoacyl-tRNA synthetase family. As to quaternary structure, homodimer. It depends on Zn(2+) as a cofactor.

The protein resides in the cytoplasm. It catalyses the reaction tRNA(Thr) + L-threonine + ATP = L-threonyl-tRNA(Thr) + AMP + diphosphate + H(+). Functionally, catalyzes the attachment of threonine to tRNA(Thr) in a two-step reaction: L-threonine is first activated by ATP to form Thr-AMP and then transferred to the acceptor end of tRNA(Thr). Also edits incorrectly charged L-seryl-tRNA(Thr). In Caldanaerobacter subterraneus subsp. tengcongensis (strain DSM 15242 / JCM 11007 / NBRC 100824 / MB4) (Thermoanaerobacter tengcongensis), this protein is Threonine--tRNA ligase.